A 283-amino-acid chain; its full sequence is NAD kinase (283 aa).

D67 serves as the catalytic Proton acceptor. Residues 67 to 68, 141 to 142, R152, D171, 182 to 187, and Q241 each bind NAD(+); these read DG, ND, and TAYSLS.

Belongs to the NAD kinase family. It depends on a divalent metal cation as a cofactor.

The protein resides in the cytoplasm. The enzyme catalyses NAD(+) + ATP = ADP + NADP(+) + H(+). Its function is as follows. Involved in the regulation of the intracellular balance of NAD and NADP, and is a key enzyme in the biosynthesis of NADP. Catalyzes specifically the phosphorylation on 2'-hydroxyl of the adenosine moiety of NAD to yield NADP. The polypeptide is NAD kinase (Heliobacterium modesticaldum (strain ATCC 51547 / Ice1)).